The primary structure comprises 402 residues: Dynactin subunit 2 (402 aa).

Residues 1 to 26 (MADPKYADLPGIARNEPDVYETSDLP) form a disordered region. 2 coiled-coil regions span residues 101–132 (PQQR…SAAE) and 357–402 (VHLD…KRLQ).

This sequence belongs to the dynactin subunit 2 family. In terms of assembly, subunit of dynactin, a multiprotein complex part of a tripartite complex with dynein and a adapter, such as BICDL1, BICD2 or HOOK3. The dynactin complex is built around ACTR1A/ACTB filament and consists of an actin-related filament composed of a shoulder domain, a pointed end and a barbed end. Its length is defined by its flexible shoulder domain. The soulder is composed of 2 DCTN1 subunits, 4 DCTN2 and 2 DCTN3.

It is found in the cytoplasm. Its subcellular location is the cytoskeleton. The protein resides in the microtubule organizing center. It localises to the centrosome. The protein localises to the membrane. In terms of biological role, part of the dynactin complex that activates the molecular motor dynein for ultra-processive transport along microtubules. In the dynactin soulder domain, binds the ACTR1A filament and acts as a molecular ruler to determine the length. Modulates cytoplasmic dynein binding to an organelle, and plays a role in prometaphase chromosome alignment and spindle organization during mitosis. Involved in anchoring microtubules to centrosomes. This is Dynactin subunit 2 (DCTN2) from Gallus gallus (Chicken).